A 212-amino-acid chain; its full sequence is Deoxyribose-phosphate aldolase (212 aa).

Asp-89 (proton donor/acceptor) is an active-site residue. Catalysis depends on Lys-151, which acts as the Schiff-base intermediate with acetaldehyde. The active-site Proton donor/acceptor is Lys-180.

This sequence belongs to the DeoC/FbaB aldolase family. DeoC type 1 subfamily.

It is found in the cytoplasm. The enzyme catalyses 2-deoxy-D-ribose 5-phosphate = D-glyceraldehyde 3-phosphate + acetaldehyde. The protein operates within carbohydrate degradation; 2-deoxy-D-ribose 1-phosphate degradation; D-glyceraldehyde 3-phosphate and acetaldehyde from 2-deoxy-alpha-D-ribose 1-phosphate: step 2/2. Catalyzes a reversible aldol reaction between acetaldehyde and D-glyceraldehyde 3-phosphate to generate 2-deoxy-D-ribose 5-phosphate. This is Deoxyribose-phosphate aldolase from Clostridium botulinum (strain ATCC 19397 / Type A).